The primary structure comprises 1393 residues: DNA-directed RNA polymerase subunit beta'' (1393 aa).

Residues Cys-224, Cys-295, Cys-302, and Cys-305 each contribute to the Zn(2+) site.

The protein belongs to the RNA polymerase beta' chain family. RpoC2 subfamily. In terms of assembly, in plastids the minimal PEP RNA polymerase catalytic core is composed of four subunits: alpha, beta, beta', and beta''. When a (nuclear-encoded) sigma factor is associated with the core the holoenzyme is formed, which can initiate transcription. Requires Zn(2+) as cofactor.

It localises to the plastid. It is found in the chloroplast. It catalyses the reaction RNA(n) + a ribonucleoside 5'-triphosphate = RNA(n+1) + diphosphate. Its function is as follows. DNA-dependent RNA polymerase catalyzes the transcription of DNA into RNA using the four ribonucleoside triphosphates as substrates. The sequence is that of DNA-directed RNA polymerase subunit beta'' from Manihot esculenta (Cassava).